Here is a 35-residue protein sequence, read N- to C-terminus: Basic endochitinase CH1 (35 aa).

The protein belongs to the glycosyl hydrolase 19 family. Chitinase class I subfamily.

It carries out the reaction Random endo-hydrolysis of N-acetyl-beta-D-glucosaminide (1-&gt;4)-beta-linkages in chitin and chitodextrins.. Its function is as follows. Defense against chitin-containing fungal pathogens. This chain is Basic endochitinase CH1, found in Castanea sativa (Sweet chestnut).